An 84-amino-acid polypeptide reads, in one-letter code: UPF0386 protein R01313 (84 aa).

The protein belongs to the UPF0386 family.

This chain is UPF0386 protein R01313, found in Rhizobium meliloti (strain 1021) (Ensifer meliloti).